Here is a 235-residue protein sequence, read N- to C-terminus: Ribosomal RNA large subunit methyltransferase E (235 aa).

Gly-76, Trp-78, Asp-99, Asp-115, and Asp-139 together coordinate S-adenosyl-L-methionine. The Proton acceptor role is filled by Lys-179.

It belongs to the class I-like SAM-binding methyltransferase superfamily. RNA methyltransferase RlmE family.

The protein localises to the cytoplasm. The catalysed reaction is uridine(2552) in 23S rRNA + S-adenosyl-L-methionine = 2'-O-methyluridine(2552) in 23S rRNA + S-adenosyl-L-homocysteine + H(+). Functionally, specifically methylates the uridine in position 2552 of 23S rRNA at the 2'-O position of the ribose in the fully assembled 50S ribosomal subunit. The polypeptide is Ribosomal RNA large subunit methyltransferase E (Rhodopseudomonas palustris (strain BisA53)).